Here is a 98-residue protein sequence, read N- to C-terminus: DNA-binding protein Fis (98 aa).

A DNA-binding region (H-T-H motif) is located at residues 74 to 93; sequence QTRAATMLGINRGTLRKKLK.

Belongs to the transcriptional regulatory Fis family. As to quaternary structure, homodimer.

Activates ribosomal RNA transcription. Plays a direct role in upstream activation of rRNA promoters. This Mannheimia haemolytica (Pasteurella haemolytica) protein is DNA-binding protein Fis.